Reading from the N-terminus, the 113-residue chain is U11-theraphotoxin-Hhn1e (113 aa).

Positions 1–21 are cleaved as a signal peptide; it reads MNTVRVTFLLVFVLAVSLGQA. A propeptide spanning residues 22–74 is cleaved from the precursor; it reads DKDENRMEMLEKTEQGKSYLDFAENLLLQKLEELEARLLEEDSEESRNSRQKR. Residues 60 to 69 are compositionally biased toward basic and acidic residues; that stretch reads LEEDSEESRN. Residues 60–87 form a disordered region; the sequence is LEEDSEESRNSRQKRCIGEGVPRDENDP. 2 disulfides stabilise this stretch: Cys75–Cys90 and Cys89–Cys110.

This sequence belongs to the neurotoxin 14 (magi-1) family. 01 (HNTX-16) subfamily. As to expression, expressed by the venom gland.

The protein localises to the secreted. Its function is as follows. Probable ion channel inhibitor. This is U11-theraphotoxin-Hhn1e from Cyriopagopus hainanus (Chinese bird spider).